The primary structure comprises 1372 residues: Paired amphipathic helix protein Sin3-like 1 (1372 aa).

The disordered stretch occupies residues 1–50 (MKRIRDDVYASGSQFRRPLGSSRGQLCGQSPVHGSGDTEEEEEGGSRRVS). 2 consecutive PAH domains span residues 51–121 (QKLT…LPKG) and 136–206 (KTVE…LPAS). The span at 210 to 222 (HSAAQHSRSQAQQ) shows a compositional bias: low complexity. Disordered stretches follow at residues 210–244 (HSAAQHSRSQAQQYSDRGSDPPLLHQMQVEKERRR) and 272–323 (REQR…SGSA). Residues 272–315 (REQRKRLDKENRARRGRDLDDREAGQDNLHHFPEKRKSSRRAEA) show a composition bias toward basic and acidic residues. The region spanning 331 to 400 (LKSMYKQAFV…DEFNQFFERC (70 aa)) is the PAH 3 domain. Disordered stretches follow at residues 764 to 783 (DVNHSTSPNGEAAVSSGGDT), 791 to 817 (LKSAANGDENSSSGTFKHGIGLLNKDS), and 934 to 1056 (GLRS…AEGM). The segment covering 938–957 (DSSKGTRNSDDPEGPSRNEK) has biased composition (basic and acidic residues). Acidic residues-rich tracts occupy residues 990–1013 (AEAEVEADAEVENEDDADDVDSEN) and 1028–1042 (SQDEDREEENGEHDE). Ser-1049 carries the phosphoserine modification.

Interacts (via PAH3) with ALY2. Interacts (via PAH2) with TBP1. Interacts with ALY3, GATA21, TRP2, TKI1, VAL1, SKP1B, FBX5 and PUB14.

It localises to the nucleus. In terms of biological role, acts as a transcriptional repressor. A histone deacetylase (HDAC) activity is required for transcription repression. May play a role in telomere stability. This chain is Paired amphipathic helix protein Sin3-like 1 (SNL1), found in Arabidopsis thaliana (Mouse-ear cress).